The following is a 431-amino-acid chain: Serine--tRNA ligase (431 aa).

237-239 (TAE) is a binding site for L-serine. ATP is bound at residue 268-270 (RSE). Residue glutamate 291 participates in L-serine binding. 355-358 (EISS) lines the ATP pocket. An L-serine-binding site is contributed by serine 390.

It belongs to the class-II aminoacyl-tRNA synthetase family. Type-1 seryl-tRNA synthetase subfamily. Homodimer. The tRNA molecule binds across the dimer.

The protein resides in the cytoplasm. It carries out the reaction tRNA(Ser) + L-serine + ATP = L-seryl-tRNA(Ser) + AMP + diphosphate + H(+). The enzyme catalyses tRNA(Sec) + L-serine + ATP = L-seryl-tRNA(Sec) + AMP + diphosphate + H(+). It participates in aminoacyl-tRNA biosynthesis; selenocysteinyl-tRNA(Sec) biosynthesis; L-seryl-tRNA(Sec) from L-serine and tRNA(Sec): step 1/1. Functionally, catalyzes the attachment of serine to tRNA(Ser). Is also able to aminoacylate tRNA(Sec) with serine, to form the misacylated tRNA L-seryl-tRNA(Sec), which will be further converted into selenocysteinyl-tRNA(Sec). The chain is Serine--tRNA ligase from Neisseria meningitidis serogroup B (strain ATCC BAA-335 / MC58).